Reading from the N-terminus, the 125-residue chain is Desulfoferrodoxin homolog (125 aa).

Positions 10, 13, 29, 30, 49, 69, 75, 116, and 119 each coordinate Fe cation.

This sequence belongs to the desulfoferrodoxin family. Fe(3+) is required as a cofactor. The cofactor is Cu(2+).

The chain is Desulfoferrodoxin homolog from Archaeoglobus fulgidus (strain ATCC 49558 / DSM 4304 / JCM 9628 / NBRC 100126 / VC-16).